The sequence spans 1859 residues: DNA-directed RNA polymerase subunit beta'' (1859 aa).

Cys286, Cys359, Cys366, and Cys369 together coordinate Zn(2+).

It belongs to the RNA polymerase beta' chain family. RpoC2 subfamily. In terms of assembly, in plastids the minimal PEP RNA polymerase catalytic core is composed of four subunits: alpha, beta, beta', and beta''. When a (nuclear-encoded) sigma factor is associated with the core the holoenzyme is formed, which can initiate transcription. Requires Zn(2+) as cofactor.

It localises to the plastid. It is found in the chloroplast. The catalysed reaction is RNA(n) + a ribonucleoside 5'-triphosphate = RNA(n+1) + diphosphate. In terms of biological role, DNA-dependent RNA polymerase catalyzes the transcription of DNA into RNA using the four ribonucleoside triphosphates as substrates. The protein is DNA-directed RNA polymerase subunit beta'' of Oltmannsiellopsis viridis (Marine flagellate).